The sequence spans 188 residues: Elongation factor P (188 aa).

N6-(3,6-diaminohexanoyl)-5-hydroxylysine is present on lysine 34.

This sequence belongs to the elongation factor P family. Post-translationally, may be beta-lysylated on the epsilon-amino group of Lys-34 by the combined action of EpmA and EpmB, and then hydroxylated on the C5 position of the same residue by EpmC (if this protein is present). Lysylation is critical for the stimulatory effect of EF-P on peptide-bond formation. The lysylation moiety may extend toward the peptidyltransferase center and stabilize the terminal 3-CCA end of the tRNA. Hydroxylation of the C5 position on Lys-34 may allow additional potential stabilizing hydrogen-bond interactions with the P-tRNA.

The protein localises to the cytoplasm. It participates in protein biosynthesis; polypeptide chain elongation. In terms of biological role, involved in peptide bond synthesis. Alleviates ribosome stalling that occurs when 3 or more consecutive Pro residues or the sequence PPG is present in a protein, possibly by augmenting the peptidyl transferase activity of the ribosome. Modification of Lys-34 is required for alleviation. The polypeptide is Elongation factor P (Photobacterium profundum (strain SS9)).